We begin with the raw amino-acid sequence, 277 residues long: Large ribosomal subunit protein uL2c (277 aa).

Residues 228-254 (VDHPHGGGEGRCPVGHAQPRTPWGKPA) are disordered.

It belongs to the universal ribosomal protein uL2 family. As to quaternary structure, part of the 50S ribosomal subunit.

The protein resides in the plastid. The protein localises to the chloroplast. This chain is Large ribosomal subunit protein uL2c (rpl2), found in Ostreococcus tauri.